The sequence spans 167 residues: Epithelial membrane protein 2 (167 aa).

The chain crosses the membrane as a helical span at residues 1–21; that stretch reads MLVLLAFIIAFHITSAALLFI. N-linked (GlcNAc...) asparagine glycans are attached at residues Asn-44, Asn-47, and Asn-52. The next 3 helical transmembrane spans lie at 67 to 87, 95 to 115, and 143 to 163; these read TMIL…LQLF, FVLT…AASI, and YILA…YLIL.

The protein belongs to the PMP-22/EMP/MP20 family. As to quaternary structure, interacts with PTK2; regulates PTK2 activation and localization. Interacts with ITGB3; regulates the levels of the heterodimer ITGA5-ITGB3 integrin surface expression. Interacts with P2RX7 (via C-terminus). Interacts with ITGB1; the interaction may be direct or indirect and ITGB1 has a heterodimer form.

It localises to the golgi apparatus membrane. The protein localises to the cell membrane. It is found in the apical cell membrane. Its subcellular location is the membrane raft. The protein resides in the cytoplasm. It localises to the nucleus. The protein localises to the perinuclear region. Functionally, functions as a key regulator of cell membrane composition by regulating protein surface expression. Also, plays a role in regulation of processes including cell migration, cell proliferation, cell contraction and cell adhesion. Regulates transepithelial migration of neutrophils into the alveolar lumen, potentially via mediation of cell surface expression of adhesion markers and lipid raft formation. Negatively regulates caveolae formation by reducing CAV1 expression and CAV1 amount by increasing lysosomal degradation. Facilitates surface trafficking and the formation of lipid rafts bearing GPI-anchor proteins. Regulates surface expression of MHC1 and ICAM1 proteins increasing susceptibility to T-cell mediated cytotoxicity. Regulates the plasma membrane expression of the integrin heterodimers ITGA6-ITGB1, ITGA5-ITGB3 and ITGA5-ITGB1 resulting in modulation of cell-matrix adhesion. Also regulates many processes through PTK2. Regulates blood vessel endothelial cell migration and angiogenesis by regulating VEGF protein expression through PTK2 activation. Regulates cell migration and cell contraction through PTK2 and SRC activation. Regulates focal adhesion density, F-actin conformation and cell adhesion capacity through interaction with PTK2. Positively regulates cell proliferation. Plays a role during cell death and cell blebbing. Promotes angiogenesis and vasculogenesis through induction of VEGFA via a HIF1A-dependent pathway. Also plays a role in embryo implantation by regulating surface trafficking of integrin heterodimer ITGA5-ITGB3. Plays a role in placental angiogenesis and uterine natural killer cell regulation at the maternal-fetal placental interface, however not required in the maternal tissues for a viable pregnancy. Involved in the early stages of embryogenic development and cardiogenesis, potentially via regulation of epithelial-mesenchymal transition timing. May play a role in glomerular filtration. This Pan troglodytes (Chimpanzee) protein is Epithelial membrane protein 2 (EMP2).